Consider the following 163-residue polypeptide: 3-isopropylmalate dehydratase small subunit (163 aa).

It belongs to the LeuD family. LeuD type 2 subfamily. As to quaternary structure, heterodimer of LeuC and LeuD.

It carries out the reaction (2R,3S)-3-isopropylmalate = (2S)-2-isopropylmalate. Its pathway is amino-acid biosynthesis; L-leucine biosynthesis; L-leucine from 3-methyl-2-oxobutanoate: step 2/4. Its function is as follows. Catalyzes the isomerization between 2-isopropylmalate and 3-isopropylmalate, via the formation of 2-isopropylmaleate. The sequence is that of 3-isopropylmalate dehydratase small subunit (leuD) from Pyrococcus horikoshii (strain ATCC 700860 / DSM 12428 / JCM 9974 / NBRC 100139 / OT-3).